The primary structure comprises 182 residues: Ribosome maturation factor RimM (182 aa).

A PRC barrel domain is found at 102–182; sequence EEGDYYWKDL…TIEVDWDPGF (81 aa).

Belongs to the RimM family. In terms of assembly, binds ribosomal protein uS19.

Its subcellular location is the cytoplasm. An accessory protein needed during the final step in the assembly of 30S ribosomal subunit, possibly for assembly of the head region. Essential for efficient processing of 16S rRNA. May be needed both before and after RbfA during the maturation of 16S rRNA. It has affinity for free ribosomal 30S subunits but not for 70S ribosomes. The chain is Ribosome maturation factor RimM from Salmonella gallinarum (strain 287/91 / NCTC 13346).